A 727-amino-acid polypeptide reads, in one-letter code: Engulfment and cell motility protein 1 (727 aa).

Residue tyrosine 18 is modified to Phosphotyrosine; by HCK. Lysine 100 and lysine 105 each carry N6-acetyllysine. Tyrosine 216 is subject to Phosphotyrosine; by HCK. One can recognise an ELMO domain in the interval 319–492 (AQRDIIFELR…VVKEQVMRAL (174 aa)). Position 344 is a phosphoserine (serine 344). Phosphotyrosine; by HCK is present on residues tyrosine 395 and tyrosine 511. A PH domain is found at 555-676 (RLVEGTCFRK…DGLNALLGKD (122 aa)). The SH3-binding motif lies at 707–714 (PDAPPPIP). The residue at position 720 (tyrosine 720) is a Phosphotyrosine; by HCK.

Interacts directly with the SH3-domain of DOCK1 via its SH3-binding site. Probably forms a heterotrimeric complex with DOCK1 and RAC1. Interacts with PLEKHG6. Interacts with HCK (via SH3 domain). Interacts with ADGRB1. Interacts with ADGRB3. Interacts with DOCK5. Post-translationally, phosphorylated by HCK.

Its subcellular location is the cytoplasm. It is found in the cell membrane. Involved in cytoskeletal rearrangements required for phagocytosis of apoptotic cells and cell motility. Acts in association with DOCK1 and CRK. Was initially proposed to be required in complex with DOCK1 to activate Rac Rho small GTPases. May enhance the guanine nucleotide exchange factor (GEF) activity of DOCK1. The sequence is that of Engulfment and cell motility protein 1 (Elmo1) from Mus musculus (Mouse).